A 353-amino-acid chain; its full sequence is N-acetyl-gamma-glutamyl-phosphate reductase (353 aa).

C155 is a catalytic residue.

This sequence belongs to the NAGSA dehydrogenase family. Type 1 subfamily.

The protein resides in the cytoplasm. The catalysed reaction is N-acetyl-L-glutamate 5-semialdehyde + phosphate + NADP(+) = N-acetyl-L-glutamyl 5-phosphate + NADPH + H(+). It functions in the pathway amino-acid biosynthesis; L-arginine biosynthesis; N(2)-acetyl-L-ornithine from L-glutamate: step 3/4. In terms of biological role, catalyzes the NADPH-dependent reduction of N-acetyl-5-glutamyl phosphate to yield N-acetyl-L-glutamate 5-semialdehyde. The chain is N-acetyl-gamma-glutamyl-phosphate reductase from Microcystis aeruginosa (strain NIES-843 / IAM M-2473).